Here is a 215-residue protein sequence, read N- to C-terminus: Late embryogenesis abundant protein 14 (215 aa).

2 disordered regions span residues Met-1–Gly-129 and Ser-190–Gln-215. 4 stretches are compositionally biased toward basic and acidic residues: residues Gly-13–Gly-24, Glu-32–Ala-41, Gly-54–Ala-81, and Ala-88–Ala-111. Residues Asp-192 to Gln-215 show a composition bias toward polar residues.

It belongs to the LEA type 4 family. Expressed in the shoot apex and leaves. Expressed in dry seeds. Expressed in roots and leaves.

Its subcellular location is the nucleus. The sequence is that of Late embryogenesis abundant protein 14 from Oryza sativa subsp. japonica (Rice).